We begin with the raw amino-acid sequence, 270 residues long: NADPH-dependent 7-cyano-7-deazaguanine reductase (270 aa).

79–81 (IES) provides a ligand contact to substrate. NADPH is bound at residue 81–82 (SK). Catalysis depends on Cys-177, which acts as the Thioimide intermediate. The Proton donor role is filled by Asp-184. Substrate is bound at residue 216-217 (HE). Residue 245 to 246 (RG) participates in NADPH binding.

Belongs to the GTP cyclohydrolase I family. QueF type 2 subfamily. In terms of assembly, homodimer.

Its subcellular location is the cytoplasm. It carries out the reaction 7-aminomethyl-7-carbaguanine + 2 NADP(+) = 7-cyano-7-deazaguanine + 2 NADPH + 3 H(+). The protein operates within tRNA modification; tRNA-queuosine biosynthesis. Functionally, catalyzes the NADPH-dependent reduction of 7-cyano-7-deazaguanine (preQ0) to 7-aminomethyl-7-deazaguanine (preQ1). The chain is NADPH-dependent 7-cyano-7-deazaguanine reductase from Acinetobacter baumannii (strain SDF).